A 446-amino-acid chain; its full sequence is Na(+)-translocating NADH-quinone reductase subunit A (446 aa).

Belongs to the NqrA family. As to quaternary structure, composed of six subunits; NqrA, NqrB, NqrC, NqrD, NqrE and NqrF.

It carries out the reaction a ubiquinone + n Na(+)(in) + NADH + H(+) = a ubiquinol + n Na(+)(out) + NAD(+). NQR complex catalyzes the reduction of ubiquinone-1 to ubiquinol by two successive reactions, coupled with the transport of Na(+) ions from the cytoplasm to the periplasm. NqrA to NqrE are probably involved in the second step, the conversion of ubisemiquinone to ubiquinol. The chain is Na(+)-translocating NADH-quinone reductase subunit A from Vibrio anguillarum (Listonella anguillarum).